Consider the following 56-residue polypeptide: Large ribosomal subunit protein bL32c (56 aa).

Belongs to the bacterial ribosomal protein bL32 family.

Its subcellular location is the plastid. The protein resides in the chloroplast. The chain is Large ribosomal subunit protein bL32c from Tupiella akineta (Green alga).